The sequence spans 150 residues: Catabolic 3-dehydroquinase 2 (150 aa).

Residue Y23 is the Proton acceptor of the active site. Substrate-binding residues include N74, H80, and D87. The Proton donor role is filled by H100. Substrate-binding positions include 101–102 (IT) and R111.

Belongs to the type-II 3-dehydroquinase family. As to quaternary structure, homododecamer. Adopts a ring-like structure, composed of an arrangement of two hexameric rings stacked on top of one another.

The catalysed reaction is 3-dehydroquinate = 3-dehydroshikimate + H2O. The protein operates within aromatic compound metabolism; 3,4-dihydroxybenzoate biosynthesis; 3,4-dihydroxybenzoate from 3-dehydroquinate: step 1/2. Functionally, is involved in the catabolism of quinate. Allows the utilization of quinate as carbon source via the beta-ketoadipate pathway. In Aspergillus fumigatus (strain ATCC MYA-4609 / CBS 101355 / FGSC A1100 / Af293) (Neosartorya fumigata), this protein is Catabolic 3-dehydroquinase 2.